Consider the following 296-residue polypeptide: NAD kinase (296 aa).

The active-site Proton acceptor is aspartate 74. NAD(+)-binding positions include 74–75, 148–149, arginine 176, aspartate 178, and 189–194; these read DG, ND, and TAYALS.

This sequence belongs to the NAD kinase family. It depends on a divalent metal cation as a cofactor.

Its subcellular location is the cytoplasm. It catalyses the reaction NAD(+) + ATP = ADP + NADP(+) + H(+). In terms of biological role, involved in the regulation of the intracellular balance of NAD and NADP, and is a key enzyme in the biosynthesis of NADP. Catalyzes specifically the phosphorylation on 2'-hydroxyl of the adenosine moiety of NAD to yield NADP. The sequence is that of NAD kinase from Nitrosomonas eutropha (strain DSM 101675 / C91 / Nm57).